The sequence spans 221 residues: Octanoyltransferase (221 aa).

The BPL/LPL catalytic domain occupies 35 to 221; that stretch reads ESYENRIIFC…RELLAALLSK (187 aa). Residues 80–87, 152–154, and 165–167 each bind substrate; these read RGGDITYH, AIG, and GLA. Residue cysteine 183 is the Acyl-thioester intermediate of the active site.

The protein belongs to the LipB family.

It localises to the cytoplasm. The catalysed reaction is octanoyl-[ACP] + L-lysyl-[protein] = N(6)-octanoyl-L-lysyl-[protein] + holo-[ACP] + H(+). Its pathway is protein modification; protein lipoylation via endogenous pathway; protein N(6)-(lipoyl)lysine from octanoyl-[acyl-carrier-protein]: step 1/2. Its function is as follows. Catalyzes the transfer of endogenously produced octanoic acid from octanoyl-acyl-carrier-protein onto the lipoyl domains of lipoate-dependent enzymes. Lipoyl-ACP can also act as a substrate although octanoyl-ACP is likely to be the physiological substrate. This is Octanoyltransferase from Bacteroides fragilis (strain ATCC 25285 / DSM 2151 / CCUG 4856 / JCM 11019 / LMG 10263 / NCTC 9343 / Onslow / VPI 2553 / EN-2).